Consider the following 743-residue polypeptide: Sulfhydryl oxidase 1 (743 aa).

The signal sequence occupies residues 1 to 42 (MWRRRARSGGGGGGGGGGAAPRCRWWPAVLALLAAALPAARS). The Thioredoxin domain maps to 43–166 (RSLYSPSDPL…LRRAIITNLE (124 aa)). Catalysis depends on nucleophile residues Cys-80 and Cys-83. 2 disulfide bridges follow: Cys-80–Cys-83 and Cys-111–Cys-120. 5 N-linked (GlcNAc...) asparagine glycosylation sites follow: Asn-254, Asn-288, Asn-295, Asn-371, and Asn-401. A disulfide bridge links Cys-407 with Cys-419. Positions 410-513 (SEPHFRGYPC…EDPQFPKLQW (104 aa)) constitute an ERV/ALR sulfhydryl oxidase domain. FAD is bound by residues Arg-415, Trp-422, His-426, Glu-461, His-465, 488–495 (WSHHNEVN), Lys-510, and Trp-513. Cysteines 459 and 462 form a disulfide. Cysteines 519 and 522 form a disulfide. Residues 567–617 (ASARLSTAGLREKEEEERKEEEEEGEKETEKPHREGETGRPGSSELRRPSI) are disordered. Acidic residues predominate over residues 580–593 (EEEERKEEEEEGEK). Residues 594–604 (ETEKPHREGET) are compositionally biased toward basic and acidic residues. Residues 707-727 (SLCIALYFLSSMCLLGMYTFF) traverse the membrane as a helical segment.

Belongs to the quiescin-sulfhydryl oxidase (QSOX) family. FAD serves as cofactor. N-glycosylated. O-glycosylated on Thr and Ser residues.

Its subcellular location is the golgi apparatus membrane. The protein resides in the secreted. It carries out the reaction 2 R'C(R)SH + O2 = R'C(R)S-S(R)CR' + H2O2. Functionally, catalyzes the oxidation of sulfhydryl groups in peptide and protein thiols to disulfides with the reduction of oxygen to hydrogen peroxide. Plays a role in disulfide bond formation in a variety of extracellular proteins. In fibroblasts, required for normal incorporation of laminin into the extracellular matrix, and thereby for normal cell-cell adhesion and cell migration. This is Sulfhydryl oxidase 1 (QSOX1) from Gallus gallus (Chicken).